Here is a 255-residue protein sequence, read N- to C-terminus: Small ribosomal subunit protein eS1B (255 aa).

Ala-2 carries the N-acetylalanine; partial modification. Ser-245 carries the phosphoserine modification. Residue Lys-248 forms a Glycyl lysine isopeptide (Lys-Gly) (interchain with G-Cter in ubiquitin) linkage. At Thr-254 the chain carries Phosphothreonine.

Belongs to the eukaryotic ribosomal protein eS1 family. As to quaternary structure, component of the small ribosomal subunit. Mature ribosomes consist of a small (40S) and a large (60S) subunit. The 40S subunit contains about 33 different proteins and 1 molecule of RNA (18S). The 60S subunit contains about 49 different proteins and 3 molecules of RNA (25S, 5.8S and 5S).

The protein resides in the cytoplasm. This is Small ribosomal subunit protein eS1B from Saccharomyces cerevisiae (strain RM11-1a) (Baker's yeast).